A 317-amino-acid chain; its full sequence is MTCKIIGSGGYLPSKIVSNDELAKFVDTNDEWIRTRTGITQRHIAGDTEYTSHLALKSAEKAIADARVSVNDIDLIITCTTTPDNSFPSVASKLQGYLGLTNIPSFDLQAVCAGFVYGLQVANSLIASGKYKTVLLIGAEKMTSLLDWSDRSTCVLFGDGAGSVILQRSSDDSGLIDSNIFSSGADYEILYTNGGVSMNGISGKIVMQGQKLFRHAIEKMQQSIEDLLHANQFSVSDIDYFIPHQANIRIINKLAELLNIEEHKVVKTVEKHANCSAASIPLALSTLKASGKIKKGDILLFSAIGAGLTWGSALIRW.

Active-site residues include cysteine 112 and histidine 244. Residues 245-249 (QANIR) form an ACP-binding region. The active site involves asparagine 274.

This sequence belongs to the thiolase-like superfamily. FabH family. As to quaternary structure, homodimer.

The protein resides in the cytoplasm. It catalyses the reaction malonyl-[ACP] + acetyl-CoA + H(+) = 3-oxobutanoyl-[ACP] + CO2 + CoA. It functions in the pathway lipid metabolism; fatty acid biosynthesis. In terms of biological role, catalyzes the condensation reaction of fatty acid synthesis by the addition to an acyl acceptor of two carbons from malonyl-ACP. Catalyzes the first condensation reaction which initiates fatty acid synthesis and may therefore play a role in governing the total rate of fatty acid production. Possesses both acetoacetyl-ACP synthase and acetyl transacylase activities. Its substrate specificity determines the biosynthesis of branched-chain and/or straight-chain of fatty acids. The sequence is that of Beta-ketoacyl-[acyl-carrier-protein] synthase III from Rickettsia felis (strain ATCC VR-1525 / URRWXCal2) (Rickettsia azadi).